The chain runs to 936 residues: Isoleucine--tRNA ligase (936 aa).

A 'HIGH' region motif is present at residues 58 to 68 (PYANGRAHLGT). Glu561 provides a ligand contact to L-isoleucyl-5'-AMP. The 'KMSKS' region signature appears at 602 to 606 (KMSKS). Residue Lys605 coordinates ATP. Zn(2+) is bound by residues Cys899, Cys902, Cys919, and Cys922.

Belongs to the class-I aminoacyl-tRNA synthetase family. IleS type 1 subfamily. Monomer. Zn(2+) serves as cofactor.

It localises to the cytoplasm. It catalyses the reaction tRNA(Ile) + L-isoleucine + ATP = L-isoleucyl-tRNA(Ile) + AMP + diphosphate. Its function is as follows. Catalyzes the attachment of isoleucine to tRNA(Ile). As IleRS can inadvertently accommodate and process structurally similar amino acids such as valine, to avoid such errors it has two additional distinct tRNA(Ile)-dependent editing activities. One activity is designated as 'pretransfer' editing and involves the hydrolysis of activated Val-AMP. The other activity is designated 'posttransfer' editing and involves deacylation of mischarged Val-tRNA(Ile). In Coxiella burnetii (strain RSA 331 / Henzerling II), this protein is Isoleucine--tRNA ligase.